Consider the following 299-residue polypeptide: ATP phosphoribosyltransferase (299 aa).

Belongs to the ATP phosphoribosyltransferase family. Long subfamily. Mg(2+) is required as a cofactor.

The protein localises to the cytoplasm. It catalyses the reaction 1-(5-phospho-beta-D-ribosyl)-ATP + diphosphate = 5-phospho-alpha-D-ribose 1-diphosphate + ATP. Its pathway is amino-acid biosynthesis; L-histidine biosynthesis; L-histidine from 5-phospho-alpha-D-ribose 1-diphosphate: step 1/9. With respect to regulation, feedback inhibited by histidine. In terms of biological role, catalyzes the condensation of ATP and 5-phosphoribose 1-diphosphate to form N'-(5'-phosphoribosyl)-ATP (PR-ATP). Has a crucial role in the pathway because the rate of histidine biosynthesis seems to be controlled primarily by regulation of HisG enzymatic activity. This is ATP phosphoribosyltransferase from Baumannia cicadellinicola subsp. Homalodisca coagulata.